A 380-amino-acid polypeptide reads, in one-letter code: Lipoyl synthase, mitochondrial (380 aa).

[4Fe-4S] cluster is bound by residues C104, C109, C115, C135, C139, C142, and S350. The Radical SAM core domain occupies 120–339; the sequence is EHGTQTATIM…ETRGNELGFL (220 aa).

The protein belongs to the radical SAM superfamily. Lipoyl synthase family. The cofactor is [4Fe-4S] cluster.

It is found in the mitochondrion. The enzyme catalyses [[Fe-S] cluster scaffold protein carrying a second [4Fe-4S](2+) cluster] + N(6)-octanoyl-L-lysyl-[protein] + 2 oxidized [2Fe-2S]-[ferredoxin] + 2 S-adenosyl-L-methionine + 4 H(+) = [[Fe-S] cluster scaffold protein] + N(6)-[(R)-dihydrolipoyl]-L-lysyl-[protein] + 4 Fe(3+) + 2 hydrogen sulfide + 2 5'-deoxyadenosine + 2 L-methionine + 2 reduced [2Fe-2S]-[ferredoxin]. It participates in protein modification; protein lipoylation via endogenous pathway; protein N(6)-(lipoyl)lysine from octanoyl-[acyl-carrier-protein]: step 2/2. In terms of biological role, catalyzes the radical-mediated insertion of two sulfur atoms into the C-6 and C-8 positions of the octanoyl moiety bound to the lipoyl domains of lipoate-dependent enzymes, thereby converting the octanoylated domains into lipoylated derivatives. This Culex quinquefasciatus (Southern house mosquito) protein is Lipoyl synthase, mitochondrial.